The primary structure comprises 481 residues: Aspartyl/glutamyl-tRNA(Asn/Gln) amidotransferase subunit B (481 aa).

This sequence belongs to the GatB/GatE family. GatB subfamily. Heterotrimer of A, B and C subunits.

The catalysed reaction is L-glutamyl-tRNA(Gln) + L-glutamine + ATP + H2O = L-glutaminyl-tRNA(Gln) + L-glutamate + ADP + phosphate + H(+). It carries out the reaction L-aspartyl-tRNA(Asn) + L-glutamine + ATP + H2O = L-asparaginyl-tRNA(Asn) + L-glutamate + ADP + phosphate + 2 H(+). In terms of biological role, allows the formation of correctly charged Asn-tRNA(Asn) or Gln-tRNA(Gln) through the transamidation of misacylated Asp-tRNA(Asn) or Glu-tRNA(Gln) in organisms which lack either or both of asparaginyl-tRNA or glutaminyl-tRNA synthetases. The reaction takes place in the presence of glutamine and ATP through an activated phospho-Asp-tRNA(Asn) or phospho-Glu-tRNA(Gln). This is Aspartyl/glutamyl-tRNA(Asn/Gln) amidotransferase subunit B from Pseudomonas fluorescens (strain ATCC BAA-477 / NRRL B-23932 / Pf-5).